The following is a 148-amino-acid chain: Putative ankyrin repeat protein RF_1158 (148 aa).

One copy of the ANK repeat lies at arginine 82 to aspartate 115.

The polypeptide is Putative ankyrin repeat protein RF_1158 (Rickettsia felis (strain ATCC VR-1525 / URRWXCal2) (Rickettsia azadi)).